A 134-amino-acid polypeptide reads, in one-letter code: Translation initiation factor 2 subunit beta (134 aa).

It belongs to the eIF-2-beta/eIF-5 family. Heterotrimer composed of an alpha, a beta and a gamma chain.

EIF-2 functions in the early steps of protein synthesis by forming a ternary complex with GTP and initiator tRNA. The chain is Translation initiation factor 2 subunit beta from Pyrobaculum aerophilum (strain ATCC 51768 / DSM 7523 / JCM 9630 / CIP 104966 / NBRC 100827 / IM2).